Consider the following 73-residue polypeptide: Conotoxin ArMKLT2-022 (73 aa).

The signal sequence occupies residues 1 to 22 (MKLTCVLIIAVLFLTACQLTTG). Positions 23–40 (EQKDHAQRSADRNSKLTR) are excised as a propeptide. The residue at position 41 (Q41) is a Pyrrolidone carboxylic acid. 3 cysteine pairs are disulfide-bonded: C42-C56, C49-C60, and C55-C67.

Belongs to the conotoxin O1 superfamily. As to expression, expressed by the venom duct.

It localises to the secreted. This chain is Conotoxin ArMKLT2-022, found in Conus arenatus (Sand-dusted cone).